The following is a 248-amino-acid chain: UPF0651 protein YPL107W, mitochondrial (248 aa).

Residues 1-26 (MIRNQGWSLLYRIYPVRRFTRYSRVD) constitute a mitochondrion transit peptide. The Oxidoreductase-like domain maps to 69-116 (KKIAGVQVPAKPQEPDNCCMSGCVNCVWEIYSEDLRDWKHRRKEAAEK).

It belongs to the UPF0651 family.

It localises to the mitochondrion. The protein is UPF0651 protein YPL107W, mitochondrial of Saccharomyces cerevisiae (strain ATCC 204508 / S288c) (Baker's yeast).